The primary structure comprises 383 residues: ATP phosphoribosyltransferase regulatory subunit (383 aa).

Belongs to the class-II aminoacyl-tRNA synthetase family. HisZ subfamily. In terms of assembly, heteromultimer composed of HisG and HisZ subunits.

The protein localises to the cytoplasm. The protein operates within amino-acid biosynthesis; L-histidine biosynthesis; L-histidine from 5-phospho-alpha-D-ribose 1-diphosphate: step 1/9. Required for the first step of histidine biosynthesis. May allow the feedback regulation of ATP phosphoribosyltransferase activity by histidine. The protein is ATP phosphoribosyltransferase regulatory subunit of Janthinobacterium sp. (strain Marseille) (Minibacterium massiliensis).